A 132-amino-acid polypeptide reads, in one-letter code: Fatty acid-binding protein, brain (132 aa).

Val2 carries the post-translational modification N-acetylvaline. 127–129 (RHY) is a binding site for a fatty acid.

The protein belongs to the calycin superfamily. Fatty-acid binding protein (FABP) family. As to quaternary structure, monomer.

It is found in the cytoplasm. Functionally, FABPs are thought to play a role in the intracellular transport of long-chain fatty acids and their acyl-CoA esters. Binds oleic and palmitic acids but not palmitoyl CoA. This is Fatty acid-binding protein, brain (FABP7) from Bos taurus (Bovine).